Reading from the N-terminus, the 128-residue chain is Large ribosomal subunit protein bL20 (128 aa).

This sequence belongs to the bacterial ribosomal protein bL20 family.

In terms of biological role, binds directly to 23S ribosomal RNA and is necessary for the in vitro assembly process of the 50S ribosomal subunit. It is not involved in the protein synthesizing functions of that subunit. The sequence is that of Large ribosomal subunit protein bL20 from Corynebacterium efficiens (strain DSM 44549 / YS-314 / AJ 12310 / JCM 11189 / NBRC 100395).